A 359-amino-acid polypeptide reads, in one-letter code: 3-dehydroquinate synthase (359 aa).

NAD(+) is bound by residues 106 to 110 (GVVGD), 130 to 131 (TT), Lys-143, Lys-152, and 170 to 173 (TLQT). Positions 185, 248, and 265 each coordinate Zn(2+).

The protein belongs to the sugar phosphate cyclases superfamily. Dehydroquinate synthase family. The cofactor is Co(2+). It depends on Zn(2+) as a cofactor. Requires NAD(+) as cofactor.

It is found in the cytoplasm. It catalyses the reaction 7-phospho-2-dehydro-3-deoxy-D-arabino-heptonate = 3-dehydroquinate + phosphate. The protein operates within metabolic intermediate biosynthesis; chorismate biosynthesis; chorismate from D-erythrose 4-phosphate and phosphoenolpyruvate: step 2/7. Its function is as follows. Catalyzes the conversion of 3-deoxy-D-arabino-heptulosonate 7-phosphate (DAHP) to dehydroquinate (DHQ). The sequence is that of 3-dehydroquinate synthase from Desulforamulus reducens (strain ATCC BAA-1160 / DSM 100696 / MI-1) (Desulfotomaculum reducens).